The primary structure comprises 518 residues: Apolipoprotein N-acyltransferase (518 aa).

6 helical membrane passes run 22-42, 63-83, 101-121, 134-154, 174-194, and 202-222; these read LAFI…LWII, FFHW…WVHV, ALLA…LAWF, LLFP…LTGF, IIGA…LALC, and LLIL…LSQI. The 251-residue stretch at 234 to 484 folds into the CN hydrolase domain; the sequence is VQGNIPQSMK…TGVLSATIPL (251 aa). Residue Glu273 is the Proton acceptor of the active site. Residue Lys343 is part of the active site. The active-site Nucleophile is Cys395. Residues 492-512 traverse the membrane as a helical segment; that stretch reads AKIGQTPLLILCGALLLVGFI.

This sequence belongs to the CN hydrolase family. Apolipoprotein N-acyltransferase subfamily.

It is found in the cell inner membrane. The catalysed reaction is N-terminal S-1,2-diacyl-sn-glyceryl-L-cysteinyl-[lipoprotein] + a glycerophospholipid = N-acyl-S-1,2-diacyl-sn-glyceryl-L-cysteinyl-[lipoprotein] + a 2-acyl-sn-glycero-3-phospholipid + H(+). It functions in the pathway protein modification; lipoprotein biosynthesis (N-acyl transfer). Functionally, catalyzes the phospholipid dependent N-acylation of the N-terminal cysteine of apolipoprotein, the last step in lipoprotein maturation. This is Apolipoprotein N-acyltransferase from Shewanella oneidensis (strain ATCC 700550 / JCM 31522 / CIP 106686 / LMG 19005 / NCIMB 14063 / MR-1).